A 538-amino-acid chain; its full sequence is uncharacterized protein (538 aa).

Disordered stretches follow at residues 20 to 71 (RLSA…GGAQ), 151 to 211 (LWAE…EHPK), 288 to 331 (MLQP…QQHK), and 458 to 482 (EFEK…LKNY). A compositionally biased stretch (basic and acidic residues) spans 154-171 (ESEKSESKGTRRDFRSYD).

This is an uncharacterized protein from Homo sapiens (Human).